Consider the following 86-residue polypeptide: Kappa-theraphotoxin-Cg1c (86 aa).

An N-terminal signal peptide occupies residues 1–21 (MKVSVLITLAVLGVMFVWASA). A propeptide spanning residues 22-50 (AELEERGSDHRDSPAWLKSMERIFQSEER) is cleaved from the precursor. 3 cysteine pairs are disulfide-bonded: Cys52–Cys66, Cys59–Cys71, and Cys65–Cys78.

Belongs to the neurotoxin 10 (Hwtx-1) family. 28 (Jztx-11) subfamily. Expressed by the venom gland.

Its subcellular location is the secreted. Functionally, probable ion channel inhibitor. This is Kappa-theraphotoxin-Cg1c from Chilobrachys guangxiensis (Chinese earth tiger tarantula).